Reading from the N-terminus, the 577-residue chain is Anthranilate synthase alpha subunit 1, chloroplastic (577 aa).

A chloroplast-targeting transit peptide spans 1 to 34; the sequence is MASLVLSLRIAPSTPPLGLGGGRFRGRRGAVACR.

This sequence belongs to the anthranilate synthase component I family. Heterotetramer consisting of two non-identical subunits: a beta subunit and a large alpha subunit.

Its subcellular location is the plastid. The protein localises to the chloroplast. The catalysed reaction is chorismate + L-glutamine = anthranilate + pyruvate + L-glutamate + H(+). It functions in the pathway amino-acid biosynthesis; L-tryptophan biosynthesis; L-tryptophan from chorismate: step 1/5. With respect to regulation, feedback inhibition by tryptophan. Its function is as follows. Part of a heterotetrameric complex that catalyzes the two-step biosynthesis of anthranilate, an intermediate in the biosynthesis of L-tryptophan. In the first step, the glutamine-binding beta subunit of anthranilate synthase (AS) provides the glutamine amidotransferase activity which generates ammonia as a substrate that, along with chorismate, is used in the second step, catalyzed by the large alpha subunit of AS to produce anthranilate. This Oryza sativa subsp. indica (Rice) protein is Anthranilate synthase alpha subunit 1, chloroplastic (ASA1).